We begin with the raw amino-acid sequence, 102 residues long: Iron-sulfur cluster assembly protein CyaY (102 aa).

It belongs to the frataxin family.

Involved in iron-sulfur (Fe-S) cluster assembly. May act as a regulator of Fe-S biogenesis. The sequence is that of Iron-sulfur cluster assembly protein CyaY from Pasteurella multocida (strain Pm70).